A 423-amino-acid chain; its full sequence is MSSILDELDWRGLIAQSTDRDALAAELAAGPMTLYSGFDPTAPSLHAGHLVPLLTLRRFQQAGHRPIVLAGGATGMIGDPRDTGERTLQTADTVADWADRIRGQLERFVEFDESPTGAIVENNLSWTGALSTIEFLRDVGKYFSVNVMLDRDTVRRRLEGEGISYTEFSYMLLQANDYVQLRKRHGCALQIGGSDQWGNIVAGVRLVRQKLGDTVHAMTTPLVTDSEGKKFGKSTGGGNLWLDPEMTTPYAWYQYFINTADADVVNYLRWFTFLEAGELGELEEATRDRPHQRTAQRRLARELTTLVHGEDATRSVEHASQALFGRGELAALDEPTLAAALREASVAELTPSGPDLITDLLVATGLSASKGAARRTIAEGGVSVNNVKIDSDEWTPQASDFLHGRWLVLRRGKRNIAGVQRVR.

Tyrosine 35 contributes to the L-tyrosine binding site. The short motif at 40-49 is the 'HIGH' region element; sequence PTAPSLHAGH. L-tyrosine-binding residues include tyrosine 170 and glutamine 174. Positions 230-234 match the 'KMSKS' region motif; sequence KFGKS. Lysine 233 lines the ATP pocket. The S4 RNA-binding domain occupies 355–412; that stretch reads DLITDLLVATGLSASKGAARRTIAEGGVSVNNVKIDSDEWTPQASDFLHGRWLVLRRG.

It belongs to the class-I aminoacyl-tRNA synthetase family. TyrS type 1 subfamily. Homodimer.

Its subcellular location is the cytoplasm. The enzyme catalyses tRNA(Tyr) + L-tyrosine + ATP = L-tyrosyl-tRNA(Tyr) + AMP + diphosphate + H(+). In terms of biological role, catalyzes the attachment of tyrosine to tRNA(Tyr) in a two-step reaction: tyrosine is first activated by ATP to form Tyr-AMP and then transferred to the acceptor end of tRNA(Tyr). The protein is Tyrosine--tRNA ligase of Mycobacterium sp. (strain JLS).